Here is a 271-residue protein sequence, read N- to C-terminus: Regulatory protein RecX (271 aa).

Belongs to the RecX family.

It is found in the cytoplasm. Functionally, modulates RecA activity. The polypeptide is Regulatory protein RecX (Lactobacillus delbrueckii subsp. bulgaricus (strain ATCC BAA-365 / Lb-18)).